The following is a 390-amino-acid chain: GTPase Obg (390 aa).

Residues 1–159 (MKFVDEASIL…RDLLLELMLL (159 aa)) enclose the Obg domain. The tract at residues 127 to 147 (NTRFKSSVNRTPRQKTNGTPG) is disordered. Residues 129–145 (RFKSSVNRTPRQKTNGT) show a composition bias toward polar residues. Residues 160–333 (ADVGMLGMPN…LCWDVMTFII (174 aa)) form the OBG-type G domain. Residues 166-173 (GMPNAGKS), 191-195 (FTTLV), 213-216 (DIPG), 283-286 (NKID), and 314-316 (SAA) contribute to the GTP site. Positions 173 and 193 each coordinate Mg(2+).

Belongs to the TRAFAC class OBG-HflX-like GTPase superfamily. OBG GTPase family. Monomer. The cofactor is Mg(2+).

It is found in the cytoplasm. Its function is as follows. An essential GTPase which binds GTP, GDP and possibly (p)ppGpp with moderate affinity, with high nucleotide exchange rates and a fairly low GTP hydrolysis rate. Plays a role in control of the cell cycle, stress response, ribosome biogenesis and in those bacteria that undergo differentiation, in morphogenesis control. In Salmonella paratyphi A (strain ATCC 9150 / SARB42), this protein is GTPase Obg.